The sequence spans 304 residues: Non-specific ribonucleoside hydrolase RihC (304 aa).

Residue histidine 233 is part of the active site.

Belongs to the IUNH family. RihC subfamily.

Functionally, hydrolyzes both purine and pyrimidine ribonucleosides with a broad-substrate specificity. The sequence is that of Non-specific ribonucleoside hydrolase RihC from Shigella flexneri serotype 5b (strain 8401).